The primary structure comprises 121 residues: Protein TusC (121 aa).

The protein belongs to the DsrF/TusC family. As to quaternary structure, heterohexamer, formed by a dimer of trimers. The hexameric TusBCD complex contains 2 copies each of TusB, TusC and TusD. The TusBCD complex interacts with TusE.

The protein localises to the cytoplasm. Functionally, part of a sulfur-relay system required for 2-thiolation of 5-methylaminomethyl-2-thiouridine (mnm(5)s(2)U) at tRNA wobble positions. In Yersinia pestis bv. Antiqua (strain Antiqua), this protein is Protein TusC.